We begin with the raw amino-acid sequence, 406 residues long: Solanesyl diphosphate synthase 1, chloroplastic (406 aa).

The N-terminal 71 residues, 1 to 71 (MMTSCRNIDL…NGIGQSQTVS (71 aa)), are a transit peptide targeting the chloroplast. Lysine 126, arginine 129, and histidine 164 together coordinate isopentenyl diphosphate. Aspartate 171 and aspartate 175 together coordinate Mg(2+). Residue arginine 180 coordinates an all-trans-polyprenyl diphosphate. Arginine 181 lines the isopentenyl diphosphate pocket. Residues lysine 257, threonine 258, glutamine 295, and lysine 312 each coordinate an all-trans-polyprenyl diphosphate.

The protein belongs to the FPP/GGPP synthase family. As to quaternary structure, homodimer. Interacts with FBN5. The cofactor is Mg(2+). As to expression, higher expression in leaves than in roots.

The protein resides in the plastid. It is found in the chloroplast. The catalysed reaction is 5 isopentenyl diphosphate + (2E,6E,10E)-geranylgeranyl diphosphate = all-trans-nonaprenyl diphosphate + 5 diphosphate. The enzyme catalyses isopentenyl diphosphate + (2E,6E)-farnesyl diphosphate = (2E,6E,10E)-geranylgeranyl diphosphate + diphosphate. Involved in providing solanesyl diphosphate for plastoquinone-9 (PQ-9) formation in plastids. Catalyzes the elongation of the prenyl side chain of PQ-9 in plastids. Contributes to the biosynthesis of plastochromanol-8 (PC-8) in plastids. Does not contribute to the synthesis of tocopherol or ubiquinone. PQ-9 and PC-8 are lipophilic antioxidants that act as protectant against photooxidative stress under high light stress conditions. Prefers geranylgeranyl diphosphate to farnesyl diphosphate as substrate. No activity with geranyl diphosphate or dimethylallyl diphosphate as substrate. The sequence is that of Solanesyl diphosphate synthase 1, chloroplastic from Arabidopsis thaliana (Mouse-ear cress).